We begin with the raw amino-acid sequence, 651 residues long: Tudor domain-containing protein 3 (651 aa).

The UBA domain occupies 193 to 233; that stretch reads LVDEKALKHITEMGFSKEASRQALMDNGNNLEAALNVLLTS. Disordered stretches follow at residues 234–271, 287–369, and 381–450; these read NKQK…SAPS, EEPK…VSEV, and YSRY…TSIP. A Phosphoserine modification is found at S256. A compositionally biased stretch (polar residues) spans 291-312; the sequence is SQPQQLHQGQYRSSNTEQNGVK. Over residues 313 to 338 the composition is skewed to basic and acidic residues; it reads DNNHLRHPPRNDTRQPRNEKPPRFQR. Residue S345 is modified to Phosphoserine. K470 participates in a covalent cross-link: Glycyl lysine isopeptide (Lys-Gly) (interchain with G-Cter in SUMO2). A Tudor domain is found at 555 to 615; it reads MWKPGDECFA…KPIQTEAWEE (61 aa). Positions 624–633 are enriched in basic and acidic residues; it reads EFRRGGDGQP. Residues 624 to 651 form a disordered region; sequence EFRRGGDGQPRRSTRPTQQFYQPPRARN. The interval 631–651 is EBM motif; may mediate interaction with the EJC; sequence GQPRRSTRPTQQFYQPPRARN.

Component of mRNA stress granules. Interacts with FMR1, FXR1, FXR2, EWSR1, FUS, SERBP1, EEF1A1 and DDX3X or DDX3Y, and with the small nuclear ribonucleoprotein-associated proteins SNRPB and SNRPN. Interacts with 'Lys-48'-linked tetra-ubiquitin, but not with monoubiquitin or 'Lys-63'-linked ubiquitin chains. May interact with the exon junction complex (EJC) composed at least of CASC3, EIF4A3, MAGOH and RBM8A. Interacts with POLR2A (via the C-terminal domain (CTD)). Post-translationally, probably cleaved by enteroviral 2A proteinase. As to expression, detected in heart, brain, placenta, lung, liver, skeletal muscle, kidney and pancreas.

Its subcellular location is the cytoplasm. The protein resides in the nucleus. In terms of biological role, scaffolding protein that specifically recognizes and binds dimethylarginine-containing proteins. Plays a role in the regulation of translation of target mRNAs by binding Arg/Gly-rich motifs (GAR) in dimethylarginine-containing proteins. In nucleus, acts as a coactivator: recognizes and binds asymmetric dimethylation on the core histone tails associated with transcriptional activation (H3R17me2a and H4R3me2a) and recruits proteins at these arginine-methylated loci. In cytoplasm, acts as an antiviral factor that participates in the assembly of stress granules together with G3BP1. In Homo sapiens (Human), this protein is Tudor domain-containing protein 3 (TDRD3).